The following is a 975-amino-acid chain: Glycine dehydrogenase (decarboxylating) (975 aa).

N6-(pyridoxal phosphate)lysine is present on lysine 723.

This sequence belongs to the GcvP family. As to quaternary structure, the glycine cleavage system is composed of four proteins: P, T, L and H. Pyridoxal 5'-phosphate is required as a cofactor.

It catalyses the reaction N(6)-[(R)-lipoyl]-L-lysyl-[glycine-cleavage complex H protein] + glycine + H(+) = N(6)-[(R)-S(8)-aminomethyldihydrolipoyl]-L-lysyl-[glycine-cleavage complex H protein] + CO2. In terms of biological role, the glycine cleavage system catalyzes the degradation of glycine. The P protein binds the alpha-amino group of glycine through its pyridoxal phosphate cofactor; CO(2) is released and the remaining methylamine moiety is then transferred to the lipoamide cofactor of the H protein. The chain is Glycine dehydrogenase (decarboxylating) from Burkholderia pseudomallei (strain 668).